A 2290-amino-acid polypeptide reads, in one-letter code: Protein Ycf2 (2290 aa).

Residues 505–530 (GSNPTERSTRDQKSLKKQQDVSFVPP) form a disordered region. A compositionally biased stretch (basic and acidic residues) spans 511-523 (RSTRDQKSLKKQQ). ATP is bound at residue 1639 to 1646 (GSIGTGRS).

It belongs to the Ycf2 family.

Its subcellular location is the plastid. The protein resides in the chloroplast stroma. Functionally, probable ATPase of unknown function. Its presence in a non-photosynthetic plant (Epifagus virginiana) and experiments in tobacco indicate that it has an essential function which is probably not related to photosynthesis. The sequence is that of Protein Ycf2 from Ceratophyllum demersum (Rigid hornwort).